The sequence spans 310 residues: tRNA-cytidine(32) 2-sulfurtransferase (310 aa).

The short motif at 47 to 52 (SGGKDS) is the PP-loop motif element. [4Fe-4S] cluster contacts are provided by C122, C125, and C213.

Belongs to the TtcA family. As to quaternary structure, homodimer. It depends on Mg(2+) as a cofactor. The cofactor is [4Fe-4S] cluster.

It localises to the cytoplasm. The enzyme catalyses cytidine(32) in tRNA + S-sulfanyl-L-cysteinyl-[cysteine desulfurase] + AH2 + ATP = 2-thiocytidine(32) in tRNA + L-cysteinyl-[cysteine desulfurase] + A + AMP + diphosphate + H(+). Its pathway is tRNA modification. Functionally, catalyzes the ATP-dependent 2-thiolation of cytidine in position 32 of tRNA, to form 2-thiocytidine (s(2)C32). The sulfur atoms are provided by the cysteine/cysteine desulfurase (IscS) system. This chain is tRNA-cytidine(32) 2-sulfurtransferase, found in Serratia proteamaculans (strain 568).